We begin with the raw amino-acid sequence, 84 residues long: Acyl carrier protein (84 aa).

Residues Met-1–Val-75 form the Carrier domain. O-(pantetheine 4'-phosphoryl)serine is present on Ser-35.

Belongs to the acyl carrier protein (ACP) family. In terms of processing, 4'-phosphopantetheine is transferred from CoA to a specific serine of apo-ACP by AcpS. This modification is essential for activity because fatty acids are bound in thioester linkage to the sulfhydryl of the prosthetic group.

The protein localises to the cytoplasm. The protein operates within lipid metabolism; fatty acid biosynthesis. Carrier of the growing fatty acid chain in fatty acid biosynthesis. The polypeptide is Acyl carrier protein (Phytoplasma mali (strain AT)).